Reading from the N-terminus, the 381-residue chain is Tafazzin (381 aa).

The Mitochondrial intermembrane portion of the chain corresponds to 1–25 (MSFRDVLERGDEFLEAYPRRSPLWR). An intramembrane segment occupies 26-47 (FLSYSTSLLTFGVSKLLLFTCY). Residues 48–381 (NVKLNGFEKL…PEGKPKGKDD (334 aa)) are Mitochondrial intermembrane-facing. The short motif at 77–82 (HMSMVD) is the HXXXXD motif element. The segment at 215 to 232 (LEATKPPIVVPIFATGFE) is required for membrane insertion.

This sequence belongs to the taffazin family.

The protein localises to the mitochondrion outer membrane. It is found in the mitochondrion inner membrane. It catalyses the reaction 1'-[1,2-diacyl-sn-glycero-3-phospho],3'-[1-acyl-sn-glycero-3-phospho]-glycerol + a 1,2-diacyl-sn-glycero-3-phosphocholine = a cardiolipin + a 1-acyl-sn-glycero-3-phosphocholine. It carries out the reaction 1,2-di-(9Z,12Z-octadecadienoyl)-sn-glycero-3-phosphocholine + 1'-[1,2-di-(9Z,12Z-octadecadienoyl)-sn-glycero-3-phospho]-3'-[1-(9Z,12Z-octadecadienoyl)-sn-glycero-3-phospho]-glycerol = 1-(9Z,12Z)-octadecadienoyl-sn-glycero-3-phosphocholine + 1',3'-bis-[1,2-di-(9Z,12Z-octadecadienoyl)-sn-glycero-3-phospho]-glycerol. The enzyme catalyses 1'-[1,2-di-(9Z-octadecenoyl)-sn-glycero-3-phospho]-3'-[1-(9Z-octadecenoyl)-2-hexadecanoyl-sn-glycero-3-phospho]-glycerol + 1-hexadecanoyl-sn-glycero-3-phosphocholine = 1'-[1,2-di-(9Z-octadecenoyl)-sn-glycero-3-phospho]-3'-[1-(9Z-octadecenoyl)-sn-glycero-3-phospho]-glycerol + 1,2-dihexadecanoyl-sn-glycero-3-phosphocholine. The catalysed reaction is 1'-[1,2-di-(9Z-octadecenoyl)-sn-glycero-3-phospho]-3'-[1-(9Z-octadecenoyl)-2-(9Z-hexadecenoyl)-sn-glycero-3-phospho]-glycerol + 1-(9Z-hexadecenoyl)-sn-glycero-3-phosphocholine = 1,2-di-(9Z-hexadecenoyl)-sn-glycero-3-phosphocholine + 1'-[1,2-di-(9Z-octadecenoyl)-sn-glycero-3-phospho]-3'-[1-(9Z-octadecenoyl)-sn-glycero-3-phospho]-glycerol. It catalyses the reaction 1',3'-bis[1,2-di-(9Z-octadecenoyl)-sn-glycero-3-phospho]-glycerol + 1-(9Z-octadecenoyl)-sn-glycero-3-phosphocholine = 1'-[1,2-di-(9Z-octadecenoyl)-sn-glycero-3-phospho]-3'-[1-(9Z-octadecenoyl)-sn-glycero-3-phospho]-glycerol + 1,2-di-(9Z-octadecenoyl)-sn-glycero-3-phosphocholine. It carries out the reaction 1'-[1,2-di-(9Z-octadecenoyl)-sn-glycero-3-phospho]-3'-[1-(9Z-octadecenoyl)-2-(9Z,12Z-octadecadienoyl)-sn-glycero-3-phospho]-glycerol + 1-(9Z,12Z)-octadecadienoyl-sn-glycero-3-phosphocholine = 1,2-di-(9Z,12Z-octadecadienoyl)-sn-glycero-3-phosphocholine + 1'-[1,2-di-(9Z-octadecenoyl)-sn-glycero-3-phospho]-3'-[1-(9Z-octadecenoyl)-sn-glycero-3-phospho]-glycerol. The enzyme catalyses 1'-[1,2-di-(9Z-octadecenoyl)-sn-glycero-3-phospho]-3'-[1-(9Z-octadecenoyl)-2-(9Z-hexadecenoyl)-sn-glycero-3-phospho]-glycerol + 1-hexadecanoyl-sn-glycero-3-phosphocholine = 1-hexadecanoyl-2-(9Z-hexadecenoyl)-sn-glycero-3-phosphocholine + 1'-[1,2-di-(9Z-octadecenoyl)-sn-glycero-3-phospho]-3'-[1-(9Z-octadecenoyl)-sn-glycero-3-phospho]-glycerol. The catalysed reaction is 1'-[1,2-di-(9Z-octadecenoyl)-sn-glycero-3-phospho]-3'-[1-(9Z-octadecenoyl)-2-hexadecanoyl-sn-glycero-3-phospho]-glycerol + 1-(9Z-hexadecenoyl)-sn-glycero-3-phosphocholine = 1-(9Z-hexadecenoyl)-2-hexadecanoyl-sn-glycero-3-phosphocholine + 1'-[1,2-di-(9Z-octadecenoyl)-sn-glycero-3-phospho]-3'-[1-(9Z-octadecenoyl)-sn-glycero-3-phospho]-glycerol. It catalyses the reaction 2 1'-[1,2-diacyl-sn-glycero-3-phospho],3'-[1-acyl-sn-glycero-3-phospho]-glycerol = 1',3'-bis-[1-acyl-sn-glycero-3-phospho]-glycerol + a cardiolipin. It carries out the reaction 2 1'-[1,2-di-(9Z-octadecenoyl)-sn-glycero-3-phospho]-3'-[1-(9Z-octadecenoyl)-sn-glycero-3-phospho]-glycerol = 1',3'-bis-[1-(9Z-octadecenoyl)-sn-glycero-3-phospho]-glycerol + 1',3'-bis[1,2-di-(9Z-octadecenoyl)-sn-glycero-3-phospho]-glycerol. The enzyme catalyses 1,2-di-(9Z-hexadecenoyl)-sn-glycero-3-phosphocholine + 1-hexadecanoyl-sn-glycero-3-phosphocholine = 1-hexadecanoyl-2-(9Z-hexadecenoyl)-sn-glycero-3-phosphocholine + 1-(9Z-hexadecenoyl)-sn-glycero-3-phosphocholine. The catalysed reaction is 1'-[1,2-di-(9Z,12Z-octadecadienoyl)-sn-glycero-3-phospho]-3'-[1-(9Z,12Z-octadecadienoyl)-sn-glycero-3-phospho]-glycerol + 1,2-di-(9Z-octadecenoyl)-sn-glycero-3-phosphocholine = 1'-[1,2-di-(9Z,12Z-octadecadienoyl)-sn-glycero-3-phospho]-3'-[1-(9Z,12Z-octadecadienoyl)-2-(9Z-octadecenoyl)-sn-glycero-3-phospho]-glycerol + 1-(9Z-octadecenoyl)-sn-glycero-3-phosphocholine. It participates in phospholipid metabolism. Acyltransferase required to remodel newly synthesized phospholipid cardiolipin (1',3'-bis-[1,2-diacyl-sn-glycero-3-phospho]-glycerol or CL), a key component of the mitochondrial inner membrane, with tissue specific acyl chains necessary for adequate mitochondrial function. Its role in cellular physiology is to improve mitochondrial performance. CL is critical for the coassembly of lipids and proteins in mitochondrial membranes, for instance, remodeling of the acyl groups of CL in the mitochondrial inner membrane affects the assembly and stability of respiratory chain complex IV and its supercomplex forms. Catalyzes the transacylation between phospholipids and lysophospholipids, with the highest rate being between phosphatidylcholine (1,2-diacyl-sn-glycero-3-phosphocholine or PC) and CL. Catalyzes both 1-acyl-sn-glycero-3-phosphocholine (lysophosphatidylcholine or LPC) reacylation and PC-CL transacylation, that means, it exchanges acyl groups between CL and PC by a combination of forward and reverse transacylations. Also catalyzes transacylations between other phospholipids such as phosphatidylethanolamine (1,2-diacyl-sn-glycero-3-phosphoethanolamine or PE) and CL, between PC and PE, and between PC and phosphatidate (1,2-diacyl-sn-glycero-3-phosphate or PA), although at lower rate. Not regiospecific, it transfers acyl groups into any of the sn-1 and sn-2 positions of the monolysocardiolipin (MLCL), which is an important prerequisite for uniformity and symmetry in CL acyl distribution. Cannot transacylate dilysocardiolipin (DLCL), thus, the role of MLCL is limited to that of an acyl acceptor. CoA-independent, it can reshuffle molecular species within a single phospholipid class. Redistributes fatty acids between MLCL, CL, and other lipids, which prolongs the half-life of CL. Its action is completely reversible, which allows for cyclic changes, such as fission and fusion or bending and flattening of the membrane. Hence, by contributing to the flexibility of the lipid composition, it plays an important role in the dynamics of mitochondria membranes. Essential for the final stage of spermatogenesis, spermatid individualization. Required for the initiation of mitophagy. The sequence is that of Tafazzin (TAZ1) from Saccharomyces cerevisiae (strain ATCC 204508 / S288c) (Baker's yeast).